Reading from the N-terminus, the 408-residue chain is Dihydrolipoyllysine-residue acetyltransferase component of pyruvate dehydrogenase complex (408 aa).

Positions 2-78 (PIKILMPALS…PVNSLIAVLS (77 aa)) constitute a Lipoyl-binding domain. At Lys-43 the chain carries N6-lipoyllysine. The Peripheral subunit-binding (PSBD) domain occupies 128-165 (FASPLAKRLAKIGDIRLENVQGSGPHGRIVKQDILSYD). Residue His-381 is part of the active site.

This sequence belongs to the 2-oxoacid dehydrogenase family. In terms of assembly, forms a 24-polypeptide structural core with octahedral symmetry. (R)-lipoate is required as a cofactor.

The catalysed reaction is N(6)-[(R)-dihydrolipoyl]-L-lysyl-[protein] + acetyl-CoA = N(6)-[(R)-S(8)-acetyldihydrolipoyl]-L-lysyl-[protein] + CoA. In terms of biological role, the pyruvate dehydrogenase complex catalyzes the overall conversion of pyruvate to acetyl-CoA and CO(2). It contains multiple copies of three enzymatic components: pyruvate dehydrogenase (E1), dihydrolipoamide acetyltransferase (E2) and lipoamide dehydrogenase (E3). This is Dihydrolipoyllysine-residue acetyltransferase component of pyruvate dehydrogenase complex (pdhC) from Rickettsia prowazekii (strain Madrid E).